A 204-amino-acid polypeptide reads, in one-letter code: Ribosomal RNA small subunit methyltransferase G (204 aa).

S-adenosyl-L-methionine contacts are provided by residues Gly76, Leu81, 127-128, and Arg140; that span reads IE.

Belongs to the methyltransferase superfamily. RNA methyltransferase RsmG family.

Its subcellular location is the cytoplasm. The enzyme catalyses guanosine(527) in 16S rRNA + S-adenosyl-L-methionine = N(7)-methylguanosine(527) in 16S rRNA + S-adenosyl-L-homocysteine. Its function is as follows. Specifically methylates the N7 position of guanine in position 527 of 16S rRNA. The chain is Ribosomal RNA small subunit methyltransferase G from Francisella philomiragia subsp. philomiragia (strain ATCC 25017 / CCUG 19701 / FSC 153 / O#319-036).